A 436-amino-acid polypeptide reads, in one-letter code: Aminotransferase tdiD (436 aa).

Substrate is bound by residues arginine 30, tyrosine 86, tyrosine 148, and asparagine 202. Lysine 270 bears the N6-(pyridoxal phosphate)lysine mark. Residue arginine 407 participates in substrate binding.

It belongs to the class-I pyridoxal-phosphate-dependent aminotransferase family. It depends on pyridoxal 5'-phosphate as a cofactor.

It carries out the reaction 3-phenylpyruvate + L-tryptophan = indole-3-pyruvate + L-phenylalanine. The protein operates within secondary metabolite biosynthesis. In terms of biological role, aminotransferase; part of the gene cluster that mediates the biosynthesis of terrequinone A, an antitumor agent. The first step in the biosynthetic pathway for terrequinone A is formation of indole pyruvic acid (IPA) from L-tryptophan by the aminotransferase tdiD. The nonribosomal peptide synthase tdiA then immediately converts unstable IPA to didemethylasterriquinone D (DDAQ D), via condensation of 2 IPA molecules. The symmetric connectivity of the 2 IPA molecules is thought to arise by head-to-tail dual Claisen condensations facilitated by the TE domain. TdiB then catalyzes reverse prenylation by transferring dimethylallyl diphosphate to carbon atom 2' of DDAQ D, to yield asterriquinone C-1. Finally, tdiC and tdiE enzymes robustly convert asterriquinone C-1 to terrequinone A via a transformation involving regular prenylation at carbon atom 5, which requires elimination of the hydroxy group on C-5. The protein is Aminotransferase tdiD of Emericella nidulans (strain FGSC A4 / ATCC 38163 / CBS 112.46 / NRRL 194 / M139) (Aspergillus nidulans).